Reading from the N-terminus, the 95-residue chain is Protein K6 (95 aa).

Residues 1–24 (MAPVHVLCCVSVLLATFYLTPTES) form the signal peptide.

This Human herpesvirus 8 type P (isolate GK18) (HHV-8) protein is Protein K6 (K6).